We begin with the raw amino-acid sequence, 274 residues long: MQAILSSWFIQGMIKATSDMWHKGWDERNGGNISLRLLAEEVEPYRRDFYQQPRKVELTQPAPELANSWFLVTGSGKFFRNVELNPAENLVLLQVSNDGMAYDIHWGLTQGGLPTSELAAHFQSHIVRMQVSGGTNRVIMHCHATNLIALSYVQKLENASFTRLLWEGSTECLVVFPDGIGIVPWMVPGTDGIGTQTAEQMREHSLVLWPFHGIFGSGPTLDDAFGLIDTAEKSAEIMVKVLSMGGKKQTISREQLIALAARFDVTPMAAALDA.

The active site involves E117. Residues H141, H143, and H212 each contribute to the Zn(2+) site.

The protein belongs to the aldolase class II family. RhaD subfamily. In terms of assembly, homotetramer. Zn(2+) serves as cofactor.

Its subcellular location is the cytoplasm. The enzyme catalyses L-rhamnulose 1-phosphate = (S)-lactaldehyde + dihydroxyacetone phosphate. It participates in carbohydrate degradation; L-rhamnose degradation; glycerone phosphate from L-rhamnose: step 3/3. Its function is as follows. Catalyzes the reversible cleavage of L-rhamnulose-1-phosphate to dihydroxyacetone phosphate (DHAP) and L-lactaldehyde. The protein is Rhamnulose-1-phosphate aldolase of Yersinia pseudotuberculosis serotype I (strain IP32953).